The sequence spans 172 residues: Protein GrpE (172 aa).

The disordered stretch occupies residues 1-23 (MNQDHPECDSEELTQNSPETDPL).

The protein belongs to the GrpE family. Homodimer.

Its subcellular location is the cytoplasm. In terms of biological role, participates actively in the response to hyperosmotic and heat shock by preventing the aggregation of stress-denatured proteins, in association with DnaK and GrpE. It is the nucleotide exchange factor for DnaK and may function as a thermosensor. Unfolded proteins bind initially to DnaJ; upon interaction with the DnaJ-bound protein, DnaK hydrolyzes its bound ATP, resulting in the formation of a stable complex. GrpE releases ADP from DnaK; ATP binding to DnaK triggers the release of the substrate protein, thus completing the reaction cycle. Several rounds of ATP-dependent interactions between DnaJ, DnaK and GrpE are required for fully efficient folding. The protein is Protein GrpE of Xylella fastidiosa (strain 9a5c).